Here is a 190-residue protein sequence, read N- to C-terminus: Imidazoleglycerol-phosphate dehydratase (190 aa).

This sequence belongs to the imidazoleglycerol-phosphate dehydratase family.

It localises to the cytoplasm. The enzyme catalyses D-erythro-1-(imidazol-4-yl)glycerol 3-phosphate = 3-(imidazol-4-yl)-2-oxopropyl phosphate + H2O. Its pathway is amino-acid biosynthesis; L-histidine biosynthesis; L-histidine from 5-phospho-alpha-D-ribose 1-diphosphate: step 6/9. In Sulfurovum sp. (strain NBC37-1), this protein is Imidazoleglycerol-phosphate dehydratase.